Reading from the N-terminus, the 698-residue chain is Elongation factor G (698 aa).

The region spanning 8–290 (ERYRNIGISA…AVIELLPSPV (283 aa)) is the tr-type G domain. GTP is bound by residues 17–24 (AHIDAGKT), 88–92 (DTPGH), and 142–145 (NKMD).

This sequence belongs to the TRAFAC class translation factor GTPase superfamily. Classic translation factor GTPase family. EF-G/EF-2 subfamily.

The protein localises to the cytoplasm. Catalyzes the GTP-dependent ribosomal translocation step during translation elongation. During this step, the ribosome changes from the pre-translocational (PRE) to the post-translocational (POST) state as the newly formed A-site-bound peptidyl-tRNA and P-site-bound deacylated tRNA move to the P and E sites, respectively. Catalyzes the coordinated movement of the two tRNA molecules, the mRNA and conformational changes in the ribosome. This chain is Elongation factor G, found in Aromatoleum aromaticum (strain DSM 19018 / LMG 30748 / EbN1) (Azoarcus sp. (strain EbN1)).